The sequence spans 694 residues: Heat shock protein HSP 90-alpha (694 aa).

Phosphothreonine; by PRKDC occurs at positions 5 and 7. Residues 9–236 (DQPMEEEEVE…DKEVSDDEAK (228 aa)) are interaction with NR3C1. An ATP-binding site is contributed by N51. N6-acetyllysine occurs at positions 58 and 84. Residues D93, K112, and F138 each contribute to the ATP site. The span at 228–241 (KEVSDDEAKQPDDK) shows a compositional bias: basic and acidic residues. The disordered stretch occupies residues 228 to 275 (KEVSDDEAKQPDDKPEIEDVGSDEEEEEKKDGDIDQEELNKTKPIWTR). S231 and S249 each carry phosphoserine. Residues 242 to 255 (PEIEDVGSDEEEEE) show a composition bias toward acidic residues. A compositionally biased stretch (basic and acidic residues) spans 256 to 268 (KKDGDIDQEELNK). Residues 258-578 (DGDIDQEELN…TANMERIMKA (321 aa)) are interaction with NR3C1. Positions 261 to 582 (IDQEELNKTK…ERIMKAQALR (322 aa)) are interaction with FNIP2 and TSC1. The tract at residues 261-694 (IDQEELNKTK…DDTSRMEEVD (434 aa)) is interaction with FLCN and FNIP1. Position 289 is a phosphotyrosine (Y289). R376 serves as a coordination point for ATP. K419 carries the N6-acetyllysine modification. Phosphoserine is present on S429. At K434 the chain carries N6-acetyllysine. S452 bears the Phosphoserine mark. K465 is subject to N6-acetyllysine. Y468 is subject to Phosphotyrosine. The residue at position 547 (K547) is an N6-acetyllysine. C560 carries the S-nitrosocysteine modification. The interval 590–693 (MAAKKHLEVN…DDDTSRMEEV (104 aa)) is interaction with NR1D1. S603 carries the phosphoserine modification. The tract at residues 644-694 (QTHANRIYRMIKLGLGIDEDDPTADDTAAAVTEEMPPLEGDDDTSRMEEVD) is required for homodimerization. A disordered region spans residues 662–694 (EDDPTADDTAAAVTEEMPPLEGDDDTSRMEEVD). The segment covering 668–677 (DDTAAAVTEE) has biased composition (low complexity). The TPR repeat-binding motif lies at 685–694 (DDTSRMEEVD). An essential for interaction with SMYD3, TSC1 and STIP1/HOP region spans residues 690–694 (MEEVD). Residues 691 to 694 (EEVD) form an essential for interaction with SGTA and TTC1 region.

The protein belongs to the heat shock protein 90 family. In terms of assembly, homodimer. Identified in NR3C1/GCR steroid receptor-chaperone complexes formed at least by NR3C1, HSP90AA1 and a variety of proteins containing TPR repeats such as FKBP4, FKBP5, PPID, PPP5C or STIP1. Forms a complex containing HSP90AA1, TSC1 and TSC2; TSC1 is required to recruit TCS2 to the complex. The closed form interacts (via the middle domain and TPR repeat-binding motif) with co-chaperone TSC1 (via C-terminus). Interacts with TOM34. Interacts with TERT; the interaction, together with PTGES3, is required for correct assembly and stabilization of the TERT holoenzyme complex. Interacts with CHORDC1 and DNAJC7. Interacts with STUB1 and UBE2N; may couple the chaperone and ubiquitination systems. Interacts (via TPR repeat-binding motif) with PPP5C (via TPR repeats); the interaction is direct and activates PPP5C phosphatase activity. Following LPS binding, may form a complex with CXCR4, GDF5 and HSPA8. Interacts with KSR1. Interacts with co-chaperone CDC37 (via C-terminus); the interaction inhibits HSP90AA1 ATPase activity. May interact with NWD1. Interacts with FNIP1 and FNIP2; the interaction inhibits HSP90AA1 ATPase activity. Interacts with co-chaperone AHSA1 (phosphorylated on 'Tyr-223'); the interaction activates HSP90AA1 ATPase activity and results in the dissociation of TSC1 from HSP90AA1. Interacts with FLCN in the presence of FNIP1. Interacts with HSP70, STIP1 and PTGES3. Interacts with SMYD3; this interaction enhances SMYD3 histone-lysine N-methyltransferase. Interacts with SGTA (via TPR repeats). Interacts with TTC1 (via TPR repeats). Interacts with HSF1 in an ATP-dependent manner. Interacts with MET; the interaction suppresses MET kinase activity. Interacts with ERBB2 in an ATP-dependent manner; the interaction suppresses ERBB2 kinase activity. Interacts with HIF1A, KEAP1 and RHOBTB2. Interacts with HSF1; this interaction is decreased in a IER5-dependent manner, promoting HSF1 accumulation in the nucleus, homotrimerization and DNA-binding activities. Interacts with STUB1 and SMAD3. Interacts with HSP90AB1; interaction is constitutive. Interacts with HECTD1 (via N-terminus). Interacts with NR3C1 (via domain NR LBD) and NR1D1 (via domain NR LBD). Interacts with NLPR12. Interacts with PDCL3. Interacts with TOMM70; the interaction is required for preprotein mitochondrial import. Interacts with TOMM70, IRF3 and TBK1; the interactions are direct and mediate the association of TOMM70 with IRF3 and TBK1. Forms a complex with ASL, ASS1 and NOS2; the complex regulates cell-autonomous L-arginine synthesis and citrulline recycling while channeling extracellular L-arginine to nitric oxide synthesis pathway. Post-translationally, ISGylated. In terms of processing, S-nitrosylated; negatively regulates the ATPase activity and the activation of eNOS by HSP90AA1. Ubiquitinated via 'Lys-63'-linked polyubiquitination by HECTD1. Ubiquitination promotes translocation into the cytoplasm away from the membrane and secretory pathways.

It is found in the nucleus. The protein resides in the cytoplasm. It localises to the melanosome. The protein localises to the cell membrane. Its subcellular location is the mitochondrion. It catalyses the reaction ATP + H2O = ADP + phosphate + H(+). Its activity is regulated as follows. In the resting state, through the dimerization of its C-terminal domain, HSP90 forms a homodimer which is defined as the open conformation. Upon ATP-binding, the N-terminal domain undergoes significant conformational changes and comes in contact to form an active closed conformation. After HSP90 finishes its chaperoning tasks of assisting the proper folding, stabilization and activation of client proteins under the active state, ATP molecule is hydrolyzed to ADP which then dissociates from HSP90 and directs the protein back to the resting state. Co-chaperone TSC1 promotes ATP binding and inhibits HSP90AA1 ATPase activity. Binding to phosphorylated AHSA1 promotes HSP90AA1 ATPase activity. Inhibited by geldanamycin, Ganetespib (STA-9090) and SNX-2112. Functionally, molecular chaperone that promotes the maturation, structural maintenance and proper regulation of specific target proteins involved for instance in cell cycle control and signal transduction. Undergoes a functional cycle that is linked to its ATPase activity which is essential for its chaperone activity. This cycle probably induces conformational changes in the client proteins, thereby causing their activation. Interacts dynamically with various co-chaperones that modulate its substrate recognition, ATPase cycle and chaperone function. Engages with a range of client protein classes via its interaction with various co-chaperone proteins or complexes, that act as adapters, simultaneously able to interact with the specific client and the central chaperone itself. Recruitment of ATP and co-chaperone followed by client protein forms a functional chaperone. After the completion of the chaperoning process, properly folded client protein and co-chaperone leave HSP90 in an ADP-bound partially open conformation and finally, ADP is released from HSP90 which acquires an open conformation for the next cycle. Plays a critical role in mitochondrial import, delivers preproteins to the mitochondrial import receptor TOMM70. Apart from its chaperone activity, it also plays a role in the regulation of the transcription machinery. HSP90 and its co-chaperones modulate transcription at least at three different levels. In the first place, they alter the steady-state levels of certain transcription factors in response to various physiological cues. Second, they modulate the activity of certain epigenetic modifiers, such as histone deacetylases or DNA methyl transferases, and thereby respond to the change in the environment. Third, they participate in the eviction of histones from the promoter region of certain genes and thereby turn on gene expression. Binds bacterial lipopolysaccharide (LPS) and mediates LPS-induced inflammatory response, including TNF secretion by monocytes. Antagonizes STUB1-mediated inhibition of TGF-beta signaling via inhibition of STUB1-mediated SMAD3 ubiquitination and degradation. Mediates the association of TOMM70 with IRF3 or TBK1 in mitochondrial outer membrane which promotes host antiviral response. In Oryctolagus cuniculus (Rabbit), this protein is Heat shock protein HSP 90-alpha (HSP90AA1).